A 188-amino-acid polypeptide reads, in one-letter code: Surfactant protein C (188 aa).

The propeptide occupies 1 to 23; it reads MDMGSKEALMESPPDYSAAPRGR. 2 S-palmitoyl cysteine lipidation sites follow: C28 and C29. Positions 59–188 are excised as a propeptide; sequence HMSQKHTEMV…LCGEVPLIYI (130 aa). Residues 94 to 188 form the BRICHOS domain; sequence FPIGSTGIVT…LCGEVPLIYI (95 aa). Residues C121 and C180 are joined by a disulfide bond. A disordered region spans residues 144-164; the sequence is NPAEPPTQRGQDKGPAAGPAS.

It localises to the secreted. The protein localises to the extracellular space. Its subcellular location is the surface film. Pulmonary surfactant associated proteins promote alveolar stability by lowering the surface tension at the air-liquid interface in the peripheral air spaces. The chain is Surfactant protein C (SFTPC) from Oryctolagus cuniculus (Rabbit).